Consider the following 186-residue polypeptide: Putative manganese efflux pump MntP (186 aa).

The next 6 membrane-spanning stretches (helical) occupy residues 1–21 (MSFL…FAVS), 41–61 (VFFG…GSAV), 71–91 (WIAF…ALYG), 105–125 (LLML…SFAF), 130–150 (ILEP…CGAV), and 165–185 (IIGG…HLLW).

It belongs to the MntP (TC 9.B.29) family.

It localises to the cell membrane. Probably functions as a manganese efflux pump. The sequence is that of Putative manganese efflux pump MntP from Methanosarcina barkeri (strain Fusaro / DSM 804).